The sequence spans 494 residues: Aspartyl/glutamyl-tRNA(Asn/Gln) amidotransferase subunit B (494 aa).

Belongs to the GatB/GatE family. GatB subfamily. In terms of assembly, heterotrimer of A, B and C subunits.

The enzyme catalyses L-glutamyl-tRNA(Gln) + L-glutamine + ATP + H2O = L-glutaminyl-tRNA(Gln) + L-glutamate + ADP + phosphate + H(+). It catalyses the reaction L-aspartyl-tRNA(Asn) + L-glutamine + ATP + H2O = L-asparaginyl-tRNA(Asn) + L-glutamate + ADP + phosphate + 2 H(+). In terms of biological role, allows the formation of correctly charged Asn-tRNA(Asn) or Gln-tRNA(Gln) through the transamidation of misacylated Asp-tRNA(Asn) or Glu-tRNA(Gln) in organisms which lack either or both of asparaginyl-tRNA or glutaminyl-tRNA synthetases. The reaction takes place in the presence of glutamine and ATP through an activated phospho-Asp-tRNA(Asn) or phospho-Glu-tRNA(Gln). This Rhizorhabdus wittichii (strain DSM 6014 / CCUG 31198 / JCM 15750 / NBRC 105917 / EY 4224 / RW1) (Sphingomonas wittichii) protein is Aspartyl/glutamyl-tRNA(Asn/Gln) amidotransferase subunit B.